The sequence spans 476 residues: PRAME family member 6 (476 aa).

Residues 97–124 (RWKLQVLDLQDVCENFWMVWSEAMARGC) form an LRR 1; degenerate repeat. One copy of the LRR 2; degenerate repeat lies at 179-203 (HLCCKKLKILGMPFRNIRSILKMVN). An LRR 3; degenerate repeat occupies 204–230 (LDCIQEVEVNCKWVLPILTQFTPYLGH). The LRR 4; degenerate repeat unit spans residues 231 to 266 (MRNLQKLVLSHMDVSRYVSPEQKKEIVTQFTTQFLK). 5 LRR repeats span residues 267-292 (LCCL…LSCL), 293-324 (KTSL…SQLK), 325-345 (TLDL…QILL), 349-376 (AATL…ALSR), and 377-401 (CFEL…LLSH).

This sequence belongs to the PRAME family. As to quaternary structure, component of a CRL2 E3 ubiquitin-protein ligase complex, also named ECS (Elongin BC-CUL2/5-SOCS-box protein) complex, composed of CUL2, Elongin BC (ELOB and ELOC), RBX1 and substrate-specific adapter PRAMEF6.

Its pathway is protein modification; protein ubiquitination. In terms of biological role, substrate-recognition component of a Cul2-RING (CRL2) E3 ubiquitin-protein ligase complex, which mediates ubiquitination of target proteins, leading to their degradation. The CRL2(PRAMEF6) complex mediates ubiquitination and degradation of truncated MSRB1/SEPX1 selenoproteins produced by failed UGA/Sec decoding. In Homo sapiens (Human), this protein is PRAME family member 6.